Consider the following 531-residue polypeptide: Zinc finger CCCH-type with G patch domain-containing protein (531 aa).

The residue at position 1 (methionine 1) is an N-acetylmethionine. A disordered region spans residues 91 to 133 (EAPAAARGSGSETVPKAEAGPESAAGGQEEEEGEDEEELSGTK). A compositionally biased stretch (low complexity) spans 107 to 117 (AEAGPESAAGG). Acidic residues predominate over residues 118 to 129 (QEEEEGEDEEEL). Residues 175-201 (KSLKPCPFFLEGKCRFKENCRFSHGQV) form a C3H1-type zinc finger. The disordered stretch occupies residues 267–289 (PPLRTEATESDSDSDGTGDSSYA). Residues 333–379 (TRGIGSRLLTKMGYEFGKGLGRHAEGRVEPIHAVVLPRGKSLDQCVE) enclose the G-patch domain. At serine 373 the chain carries Phosphoserine. Disordered regions lie at residues 385–409 (TRVG…GGRP), 426–446 (APGA…DMYH), and 509–531 (RAQE…MTEF). Over residues 426–438 (APGALEAGAAPAG) the composition is skewed to low complexity. Residues 518 to 531 (EQRKADTHKKMTEF) are compositionally biased toward basic and acidic residues.

In terms of assembly, interacts with CHD4/Mi-2; the interaction is direct. Post-translationally, ubiquitinated in case of infection by HIV-1, leading to its degradation. Ubiquitination is mediated by the CUL4A-RBX1-DDB1-DCAF1/VPRBP complex that is hijacked by HIV-1 via interaction between HIV-1 Vpr and DCAF1/VPRBP. As to expression, widely expressed.

Its subcellular location is the nucleus. Its function is as follows. Transcription repressor that specifically binds the 5'-GGAG[GA]A[GA]A-3' consensus sequence. Represses transcription by recruiting the chromatin multiprotein complex NuRD to target promoters. Negatively regulates expression of EGFR, a gene involved in cell proliferation, survival and migration. Its ability to repress genes of the EGFR pathway suggest it may act as a tumor suppressor. Able to suppress breast carcinogenesis. In terms of biological role, antagonizes the transcription repression by isoform 1 by competing for the binding of the NuRD complex. Does not bind DNA. This Homo sapiens (Human) protein is Zinc finger CCCH-type with G patch domain-containing protein (ZGPAT).